Here is a 214-residue protein sequence, read N- to C-terminus: ATP-dependent Clp protease proteolytic subunit (214 aa).

S110 acts as the Nucleophile in catalysis. The active site involves H135.

It belongs to the peptidase S14 family. In terms of assembly, fourteen ClpP subunits assemble into 2 heptameric rings which stack back to back to give a disk-like structure with a central cavity, resembling the structure of eukaryotic proteasomes.

It is found in the cytoplasm. It carries out the reaction Hydrolysis of proteins to small peptides in the presence of ATP and magnesium. alpha-casein is the usual test substrate. In the absence of ATP, only oligopeptides shorter than five residues are hydrolyzed (such as succinyl-Leu-Tyr-|-NHMec, and Leu-Tyr-Leu-|-Tyr-Trp, in which cleavage of the -Tyr-|-Leu- and -Tyr-|-Trp bonds also occurs).. In terms of biological role, cleaves peptides in various proteins in a process that requires ATP hydrolysis. Has a chymotrypsin-like activity. Plays a major role in the degradation of misfolded proteins. The sequence is that of ATP-dependent Clp protease proteolytic subunit from Legionella pneumophila (strain Paris).